The sequence spans 401 residues: MDHEDVTRRAVEKKNKLASSLIHAPFAICGLCWAFVYQKLIYKQTYTDTHARNYKVPARFQLPDPLLTQILNHLPTEEAVKTSVLSTRWRTLWLWVHNLELSFSKFSSFNAFLSFGNWFFDSDRVSCIESLKLSLDGNDASYLKPWIDAFVKRKIQRLHVRLTQGCEMPLSLYRLVSSCPVLEELKIDVVWMDGRVYRVHSRSLKSFILTDLESDAKFDISLRFHKWVFNEAKTSTIHMFLAWISRVRDMTICAQTFKLIHHYSESVQLPQFGYMSSLYITLNASDLKWFPIFLRSIPNLKSLILVMERTGSSHQLSPKAIKRVSISSVPECLLSSLEFVEFKAPICGLAPEMMLVWYFLENSPTLKKLTLRLKSHSTKDDFVKKLLKIPRCSTECEVIFL.

Residues 56–102 (VPARFQLPDPLLTQILNHLPTEEAVKTSVLSTRWRTLWLWVHNLELS) form the F-box domain. 2 LRR repeats span residues 128–152 (IESLKLSLDGNDASYLKPWIDAFVK) and 275–296 (MSSLYITLNASDLKWFPIFLRS). The FBD domain occupies 321 to 373 (IKRVSISSVPECLLSSLEFVEFKAPICGLAPEMMLVWYFLENSPTLKKLTLRL).

This chain is Putative F-box/FBD/LRR-repeat protein At3g23955, found in Arabidopsis thaliana (Mouse-ear cress).